The chain runs to 159 residues: UPF0262 protein Dshi_0980 (159 aa).

It belongs to the UPF0262 family.

This Dinoroseobacter shibae (strain DSM 16493 / NCIMB 14021 / DFL 12) protein is UPF0262 protein Dshi_0980.